The primary structure comprises 85 residues: MAISKKMLTTFVLTILLAVSFVHCSDRTSGVGINQEYAKCYDLADCQKPKVDDAACERFCGAKSFLLYGKCDTATNKCCCKSKTK.

Positions 1–24 (MAISKKMLTTFVLTILLAVSFVHC) are cleaved as a signal peptide. 4 disulfides stabilise this stretch: C40/C80, C46/C71, C56/C78, and C60/C79.

Belongs to the DEFL family.

It localises to the secreted. The chain is Defensin-like protein 112 from Arabidopsis thaliana (Mouse-ear cress).